The sequence spans 47 residues: Protein YpaB (47 aa).

The protein is Protein YpaB (ypaB) of Escherichia coli (strain K12).